An 849-amino-acid chain; its full sequence is Protein translocase subunit SecA (849 aa).

Residues glutamine 85, 103–107 (GEGKT), and aspartate 493 each bind ATP. Zn(2+) contacts are provided by cysteine 832, cysteine 834, cysteine 843, and histidine 844.

This sequence belongs to the SecA family. As to quaternary structure, monomer and homodimer. Part of the essential Sec protein translocation apparatus which comprises SecA, SecYEG and auxiliary proteins SecDF. Other proteins may also be involved. Requires Zn(2+) as cofactor.

The protein localises to the cell membrane. It localises to the cytoplasm. It catalyses the reaction ATP + H2O + cellular proteinSide 1 = ADP + phosphate + cellular proteinSide 2.. Its function is as follows. Part of the Sec protein translocase complex. Interacts with the SecYEG preprotein conducting channel. Has a central role in coupling the hydrolysis of ATP to the transfer of proteins into and across the cell membrane, serving as an ATP-driven molecular motor driving the stepwise translocation of polypeptide chains across the membrane. This is Protein translocase subunit SecA from Streptococcus thermophilus (strain ATCC BAA-491 / LMD-9).